The primary structure comprises 229 residues: Uracil-DNA glycosylase (229 aa).

The Proton acceptor role is filled by Asp64.

Belongs to the uracil-DNA glycosylase (UDG) superfamily. UNG family.

It localises to the cytoplasm. It carries out the reaction Hydrolyzes single-stranded DNA or mismatched double-stranded DNA and polynucleotides, releasing free uracil.. Functionally, excises uracil residues from the DNA which can arise as a result of misincorporation of dUMP residues by DNA polymerase or due to deamination of cytosine. The polypeptide is Uracil-DNA glycosylase (Escherichia fergusonii (strain ATCC 35469 / DSM 13698 / CCUG 18766 / IAM 14443 / JCM 21226 / LMG 7866 / NBRC 102419 / NCTC 12128 / CDC 0568-73)).